A 189-amino-acid polypeptide reads, in one-letter code: EIHFTRTTHGIMANITHFCSRTKSRTWGKDGWQKIVVCIIADGRQKVHPRTLNALAAMGVYQDGIAKNIVNQKPVNAHVYEYTTQVSLDPDLKFKGAEKGIMPCQIIFCLKERNEKKLNSHRWFFNAFGRALTPNVCILLDVGTKPGPTALYHLWKAFDQDSNVAGAAGEIKAGKGKGWLGLFNPLVAS.

This sequence belongs to the chitin synthase family. Class II subfamily.

The protein resides in the cell membrane. The enzyme catalyses [(1-&gt;4)-N-acetyl-beta-D-glucosaminyl](n) + UDP-N-acetyl-alpha-D-glucosamine = [(1-&gt;4)-N-acetyl-beta-D-glucosaminyl](n+1) + UDP + H(+). Polymerizes chitin, a structural polymer of the cell wall and septum, by transferring the sugar moiety of UDP-GlcNAc to the non-reducing end of the growing chitin polymer. The chain is Chitin synthase 3 (CHS3) from Ajellomyces capsulatus (Darling's disease fungus).